The primary structure comprises 216 residues: Adenylate kinase (216 aa).

An ATP-binding site is contributed by 10–15 (GAGKGT). Positions 30-59 (STGDIFRKNISENTPLGIEAKSYMDNGQLV) are NMP. Residues Thr31, Arg36, 57 to 59 (QLV), 85 to 88 (GFPR), and Gln92 contribute to the AMP site. Residues 126 to 163 (GRRVCPSCGASYHIKFNPPTNDGKCDLCGSDVIQRKDD) form an LID region. Residue Arg127 coordinates ATP. Zn(2+)-binding residues include Cys130 and Cys133. 136–137 (SY) serves as a coordination point for ATP. Residues Cys150 and Cys153 each contribute to the Zn(2+) site. 2 residues coordinate AMP: Arg160 and Arg171. Gln199 is an ATP binding site.

The protein belongs to the adenylate kinase family. As to quaternary structure, monomer.

The protein resides in the cytoplasm. It catalyses the reaction AMP + ATP = 2 ADP. Its pathway is purine metabolism; AMP biosynthesis via salvage pathway; AMP from ADP: step 1/1. Functionally, catalyzes the reversible transfer of the terminal phosphate group between ATP and AMP. Plays an important role in cellular energy homeostasis and in adenine nucleotide metabolism. This chain is Adenylate kinase, found in Clostridium perfringens (strain ATCC 13124 / DSM 756 / JCM 1290 / NCIMB 6125 / NCTC 8237 / Type A).